The chain runs to 321 residues: MIEAGIIGGAGYTAGELIRILLHHPEVNLNFVYSTSQLGKSLYSIHQDLIGDTEIEFTSKINKEADVVFLCLGHGNSKRFLSENKFSEKTKIVDLSTDFRMKANDHSFVYGMPELNQEEIKNANFIANPGCFATAITFAVLPLAKNGLLNDDVHVNAVTGATGAGTSLSATTHFTWRDNNFSAYKSFEHQHLQEIGQSFKQLQSDHTSEINFIPNRGNFSRGIHATAYTKFSGELEDAKKLYSEFYKDAAFTFLTDEELHLKQVVNTNKCLLRLQKFGNKLLITSVIDNLLKGASGQAVQNMNLMFGLEEKMGLNLKAGYF.

Cys-131 is an active-site residue.

It belongs to the NAGSA dehydrogenase family. Type 1 subfamily.

The protein localises to the cytoplasm. It carries out the reaction N-acetyl-L-glutamate 5-semialdehyde + phosphate + NADP(+) = N-acetyl-L-glutamyl 5-phosphate + NADPH + H(+). The protein operates within amino-acid biosynthesis; L-arginine biosynthesis; N(2)-acetyl-L-ornithine from L-glutamate: step 3/4. Its function is as follows. Catalyzes the NADPH-dependent reduction of N-acetyl-5-glutamyl phosphate to yield N-acetyl-L-glutamate 5-semialdehyde. This chain is N-acetyl-gamma-glutamyl-phosphate reductase, found in Christiangramia forsetii (strain DSM 17595 / CGMCC 1.15422 / KT0803) (Gramella forsetii).